The primary structure comprises 162 residues: Transcription elongation factor GreA (162 aa).

Residues 44 to 69 (SENAEYEAAREKQAFVEARIKHLEDI) are a coiled coil.

Belongs to the GreA/GreB family.

Functionally, necessary for efficient RNA polymerase transcription elongation past template-encoded arresting sites. The arresting sites in DNA have the property of trapping a certain fraction of elongating RNA polymerases that pass through, resulting in locked ternary complexes. Cleavage of the nascent transcript by cleavage factors such as GreA or GreB allows the resumption of elongation from the new 3'terminus. GreA releases sequences of 2 to 3 nucleotides. The sequence is that of Transcription elongation factor GreA from Rickettsia bellii (strain RML369-C).